The chain runs to 384 residues: Carbamoyl phosphate synthase small chain (384 aa).

The interval Met1–Glu193 is CPSase. L-glutamine contacts are provided by Ser51, Gly245, and Gly247. Residues His197–Arg384 form the Glutamine amidotransferase type-1 domain. Cys273 acts as the Nucleophile in catalysis. Residues Leu274, Gln277, Asn315, Gly317, and Phe318 each contribute to the L-glutamine site. Residues His357 and Glu359 contribute to the active site.

Belongs to the CarA family. In terms of assembly, composed of two chains; the small (or glutamine) chain promotes the hydrolysis of glutamine to ammonia, which is used by the large (or ammonia) chain to synthesize carbamoyl phosphate. Tetramer of heterodimers (alpha,beta)4.

It catalyses the reaction hydrogencarbonate + L-glutamine + 2 ATP + H2O = carbamoyl phosphate + L-glutamate + 2 ADP + phosphate + 2 H(+). The enzyme catalyses L-glutamine + H2O = L-glutamate + NH4(+). Its pathway is amino-acid biosynthesis; L-arginine biosynthesis; carbamoyl phosphate from bicarbonate: step 1/1. The protein operates within pyrimidine metabolism; UMP biosynthesis via de novo pathway; (S)-dihydroorotate from bicarbonate: step 1/3. Small subunit of the glutamine-dependent carbamoyl phosphate synthetase (CPSase). CPSase catalyzes the formation of carbamoyl phosphate from the ammonia moiety of glutamine, carbonate, and phosphate donated by ATP, constituting the first step of 2 biosynthetic pathways, one leading to arginine and/or urea and the other to pyrimidine nucleotides. The small subunit (glutamine amidotransferase) binds and cleaves glutamine to supply the large subunit with the substrate ammonia. The chain is Carbamoyl phosphate synthase small chain from Stutzerimonas stutzeri (Pseudomonas stutzeri).